A 518-amino-acid polypeptide reads, in one-letter code: D-aminopeptidase (518 aa).

S62 acts as the Nucleophile in catalysis. K65 acts as the Proton donor/acceptor in catalysis. The tract at residues 373 to 392 is disordered; the sequence is FGTGPEKMDISGENEAQSSM. The interval 477–487 is important for specificity; it reads QRSMDAPSPGE. Position 481 (D481) interacts with substrate.

The protein belongs to the peptidase S12 family. In terms of assembly, homodimer.

It carries out the reaction Release of an N-terminal D-amino acid from a peptide, Xaa-|-Yaa-, in which Xaa is preferably D-Ala, D-Ser or D-Thr. D-amino acid amides and methyl esters also are hydrolyzed, as is glycine amide.. With respect to regulation, inhibited by beta-lactam compounds such as 6-aminopenicillic acid, 7-aminocephalosporanic acid, benzylpenicillin and ampicillin. Inhibited by p-chloromercuribenzoate. In terms of biological role, hydrolyzes N-terminal residues in D-amino acid-containing peptides. This chain is D-aminopeptidase, found in Brucella melitensis biotype 2 (strain ATCC 23457).